Here is a 934-residue protein sequence, read N- to C-terminus: UPF0182 protein sync_1321 (934 aa).

The next 9 membrane-spanning stretches (helical) occupy residues 2 to 22 (AKII…IVII), 45 to 65 (LLLQ…CALW), 86 to 106 (GYRY…VLAI), 129 to 149 (FSTG…IMFG), 165 to 185 (VCIC…FSIP), 208 to 228 (IAFG…TALW), 251 to 271 (HGLR…MWLS), 300 to 320 (LGSI…FSSV), and 327 to 347 (LILA…FPLM).

Belongs to the UPF0182 family.

The protein resides in the cell membrane. The polypeptide is UPF0182 protein sync_1321 (Synechococcus sp. (strain CC9311)).